The following is a 495-amino-acid chain: Lysine--tRNA ligase (495 aa).

Residues E406 and E413 each contribute to the Mg(2+) site.

The protein belongs to the class-II aminoacyl-tRNA synthetase family. In terms of assembly, homodimer. Requires Mg(2+) as cofactor.

Its subcellular location is the cytoplasm. The catalysed reaction is tRNA(Lys) + L-lysine + ATP = L-lysyl-tRNA(Lys) + AMP + diphosphate. This chain is Lysine--tRNA ligase, found in Staphylococcus aureus (strain MW2).